Reading from the N-terminus, the 328-residue chain is Stress response kinase A (328 aa).

The active-site Proton acceptor is Asp-201. 2 residues coordinate Mg(2+): Asn-206 and Asp-217. The active site involves Asp-217.

The protein belongs to the SrkA/RdoA protein kinase family. As to quaternary structure, monomer. It depends on Mg(2+) as a cofactor.

The protein resides in the cytoplasm. The enzyme catalyses L-seryl-[protein] + ATP = O-phospho-L-seryl-[protein] + ADP + H(+). It catalyses the reaction L-threonyl-[protein] + ATP = O-phospho-L-threonyl-[protein] + ADP + H(+). Its function is as follows. A protein kinase that phosphorylates Ser and Thr residues. Probably acts to suppress the effects of stress linked to accumulation of reactive oxygen species. Probably involved in the extracytoplasmic stress response. This chain is Stress response kinase A, found in Escherichia coli O157:H7.